The sequence spans 654 residues: Pentatricopeptide repeat-containing protein At4g19191, mitochondrial (654 aa).

The N-terminal 65 residues, 1–65, are a transit peptide targeting the mitochondrion; the sequence is MSLIHRRLYR…PFVAKACARL (65 aa). PPR repeat units lie at residues 86 to 116, 117 to 151, 152 to 186, 187 to 217, 220 to 254, 255 to 289, 290 to 320, 321 to 355, 356 to 390, 392 to 422, 423 to 457, 458 to 488, and 494 to 524; these read DVFV…MPER, DATT…EITP, DSVT…GVDV, QVTV…IDRG, TVVS…EFKP, DLST…GTDQ, DIEA…MTSR, TCVS…GEKP, DLVT…GCKR, NVMI…TPEK, TVVT…DYKP, NHIT…MKQV, and GLDH…MSAK. A type E motif region spans residues 529-604; the sequence is IWGALLNACK…YPGESVIQVN (76 aa). Residues 605 to 635 form a type E(+) motif region; it reads GKNHSFTVGEHGHVENEVIYFTLNGLSLFAK.

It belongs to the PPR family. PCMP-E subfamily.

The protein localises to the mitochondrion. This is Pentatricopeptide repeat-containing protein At4g19191, mitochondrial (PCMP-E1) from Arabidopsis thaliana (Mouse-ear cress).